The primary structure comprises 344 residues: uncharacterized protein (344 aa).

The signal sequence occupies residues 1 to 28; that stretch reads MNKKSLNIVATLGILLVLAFSGCVDQSA.

Belongs to the bacterial solute-binding protein 1 family. WtpA subfamily.

This is an uncharacterized protein from Methanococcus maripaludis (strain C7 / ATCC BAA-1331).